A 286-amino-acid chain; its full sequence is Bifunctional protein FolD (286 aa).

NADP(+)-binding positions include 167 to 169 and Ile-233; that span reads GRS.

It belongs to the tetrahydrofolate dehydrogenase/cyclohydrolase family. Homodimer.

It catalyses the reaction (6R)-5,10-methylene-5,6,7,8-tetrahydrofolate + NADP(+) = (6R)-5,10-methenyltetrahydrofolate + NADPH. It carries out the reaction (6R)-5,10-methenyltetrahydrofolate + H2O = (6R)-10-formyltetrahydrofolate + H(+). The protein operates within one-carbon metabolism; tetrahydrofolate interconversion. Catalyzes the oxidation of 5,10-methylenetetrahydrofolate to 5,10-methenyltetrahydrofolate and then the hydrolysis of 5,10-methenyltetrahydrofolate to 10-formyltetrahydrofolate. The chain is Bifunctional protein FolD from Limosilactobacillus reuteri (strain DSM 20016) (Lactobacillus reuteri).